Here is a 642-residue protein sequence, read N- to C-terminus: 1,4-alpha-glucan branching enzyme GlgB (642 aa).

D304 serves as the catalytic Nucleophile. Residue E355 is the Proton donor of the active site.

The protein belongs to the glycosyl hydrolase 13 family. GlgB subfamily. As to quaternary structure, monomer.

It catalyses the reaction Transfers a segment of a (1-&gt;4)-alpha-D-glucan chain to a primary hydroxy group in a similar glucan chain.. Its pathway is glycan biosynthesis; glycogen biosynthesis. In terms of biological role, catalyzes the formation of the alpha-1,6-glucosidic linkages in glycogen by scission of a 1,4-alpha-linked oligosaccharide from growing alpha-1,4-glucan chains and the subsequent attachment of the oligosaccharide to the alpha-1,6 position. The protein is 1,4-alpha-glucan branching enzyme GlgB of Streptococcus pneumoniae serotype 2 (strain D39 / NCTC 7466).